We begin with the raw amino-acid sequence, 900 residues long: Phospholipase DDHD1 (900 aa).

3 disordered regions span residues 1–28 (MNYPGRGSPRSPEHNGRGGGGGAWELGS), 100–152 (LRYY…GGPA), and 202–233 (GARPQGGDRDGDHVCSPTGPASSSGEDDDEDR). Phosphoserine occurs at positions 8 and 11. Residues 130–140 (SGGGGATGGSP) are compositionally biased toward gly residues. The active site involves S537. The region spanning 611–886 (LKFKVENFFC…ALFLLTFMYK (276 aa)) is the DDHD domain. Disordered stretches follow at residues 706-725 (AKEPTSVSENEGISTIPSPV) and 768-801 (SSTTQSSETSKDSMEDEKKPVASPSATTVGTQTL). A compositionally biased stretch (polar residues) spans 710 to 725 (TSVSENEGISTIPSPV). Position 723 is a phosphoserine (S723). Residues 776–787 (TSKDSMEDEKKP) show a composition bias toward basic and acidic residues. A compositionally biased stretch (polar residues) spans 791 to 801 (PSATTVGTQTL).

Belongs to the PA-PLA1 family. In terms of assembly, forms homooligomers and, to a much smaller extent, heterooligomers with DDHD2. As to expression, highly expressed in testis. Also expressed in brain, spleen and lung. Only expressed in cerebellum in fetal brain.

The protein localises to the cytoplasm. It carries out the reaction a 1,2-diacyl-sn-glycero-3-phosphate + H2O = a 2-acyl-sn-glycerol 3-phosphate + a fatty acid + H(+). It catalyses the reaction a 1,2-diacyl-sn-glycero-3-phospho-(1D-myo-inositol) + H2O = a 2-acyl-sn-glycero-3-phospho-D-myo-inositol + a fatty acid + H(+). The enzyme catalyses 1-octadecanoyl-2-(5Z,8Z,11Z,14Z-eicosatetraenoyl)-sn-glycero-3-phospho-(1D-myo-inositol) + H2O = 2-(5Z,8Z,11Z,14Z-eicosatetraenoyl)-sn-glycero-3-phospho-(1D-myo-inositol) + octadecanoate + H(+). The catalysed reaction is a 1-acyl-2-(5Z,8Z,11Z,14Z-eicosatetraenoyl)-sn-glycero-3-phospho-(1D-myo-inositol) + H2O = 2-(5Z,8Z,11Z,14Z-eicosatetraenoyl)-sn-glycero-3-phospho-(1D-myo-inositol) + a fatty acid + H(+). It carries out the reaction 1,2-dihexadecanoyl-sn-glycero-3-phospho-(1D-myo-inositol) + H2O = 2-hexadecanoyl-sn-glycero-3-phospho-(1D-myo-inositol) + hexadecanoate + H(+). It catalyses the reaction a 1-acyl-2-(5Z,8Z,11Z,14Z)-eicosatetraenoyl-sn-glycero-3-phosphate + H2O = 2-(5Z,8Z,11Z,14Z-eicosatetraenoyl)-sn-glycero-3-phosphate + a fatty acid + H(+). The enzyme catalyses 1,2-di-(9Z-octadecenoyl)-sn-glycero-3-phosphate + H2O = 2-(9Z-octadecenoyl)-sn-glycero-3-phosphate + (9Z)-octadecenoate + H(+). The catalysed reaction is 1-hexadecanoyl-2-(9Z-octadecenoyl)-sn-glycero-3-phosphate + H2O = 2-(9Z-octadecenoyl)-sn-glycero-3-phosphate + hexadecanoate + H(+). It carries out the reaction 1-hexadecanoyl-2-(9Z-octadecenoyl)-sn-glycero-3-phospho-L-serine + H2O = 2-(9Z-octadecenoyl)-sn-glycero-3-phospho-L-serine + hexadecanoate + H(+). It catalyses the reaction 1,2-di-(5Z,8Z,11Z,14Z)-eicosatetraenoyl-sn-glycero-3-phosphate + H2O = 2-(5Z,8Z,11Z,14Z-eicosatetraenoyl)-sn-glycero-3-phosphate + (5Z,8Z,11Z,14Z)-eicosatetraenoate + H(+). The enzyme catalyses 1-octadecanoyl-2-(5Z,8Z,11Z,14Z-eicosatetraenoyl)-sn-glycero-3-phosphate + H2O = 2-(5Z,8Z,11Z,14Z-eicosatetraenoyl)-sn-glycero-3-phosphate + octadecanoate + H(+). The catalysed reaction is a 1,2-diacyl-sn-glycero-3-phosphocholine + H2O = a 2-acyl-sn-glycero-3-phosphocholine + a fatty acid + H(+). It carries out the reaction a 1,2-diacyl-sn-glycero-3-phosphoethanolamine + H2O = a 2-acyl-sn-glycero-3-phosphoethanolamine + a fatty acid + H(+). It catalyses the reaction a 1,2-diacyl-sn-glycero-3-phospho-L-serine + H2O = a 2-acyl-sn-glycero-3-phospho-L-serine + a fatty acid + H(+). The enzyme catalyses a 1,2-diacyl-sn-glycero-3-phospho-(1'-sn-glycerol) + H2O = 2-acyl-sn-glycero-3-phospho-(1'-sn-glycerol) + a fatty acid + H(+). The catalysed reaction is 1-hexadecanoyl-2-(9Z-octadecenoyl)-sn-glycero-3-phospho-(1'-sn-glycerol) + H2O = 2-(9Z-octadecenoyl)-sn-glycero-3-phospho-(1'-sn-glycerol) + hexadecanoate + H(+). It carries out the reaction 1-acyl-2-(5Z,8Z,11Z,14Z-eicosatetraenoyl)-sn-glycero-3-phosphocholine + H2O = 2-(5Z,8Z,11Z,14Z)-eicosatetraenoyl-sn-glycero-3-phosphocholine + a fatty acid + H(+). It catalyses the reaction 1-acyl-2-(5Z,8Z,11Z,14Z)-eicosatetraenoyl-sn-glycero-3-phosphoethanolamine + H2O = 2-(5Z,8Z,11Z,14Z)-eicosatetraenoyl-sn-glycero-3-phosphoethanolamine + a fatty acid + H(+). The enzyme catalyses 1-(9Z-octadecenoyl)-2-(7Z,10Z,13Z,16Z,19Z-docosapentaenoyl)-sn-glycero-3-phospho-1D-myo-inositol + H2O = 2-(7Z,10Z,13Z,16Z,19Z-docosapentaenoyl)-sn-glycero-3-phospho-1D-myo-inositol + (9Z)-octadecenoate + H(+). The catalysed reaction is 1-(9Z-octadecenoyl)-2-(5Z,8Z,11Z,14Z-eicosatetraenoyl)-sn-glycero-3-phospho-1D-myo-inositol + H2O = 2-(5Z,8Z,11Z,14Z-eicosatetraenoyl)-sn-glycero-3-phospho-(1D-myo-inositol) + (9Z)-octadecenoate + H(+). It carries out the reaction 1,2-di-(9Z-octadecenoyl)-sn-glycero-3-phospho-1D-myo-inositol + H2O = 2-(9Z-octadecenoyl)-sn-glycero-3-phospho-1D-myo-inositol + (9Z)-octadecenoate + H(+). It catalyses the reaction 1-(9Z-octadecenoyl)-2-(8Z,11Z,14Z-eicosatrienoyl)-sn-glycero-3-phospho-1D-myo-inositol + H2O = 2-(8Z,11Z,14Z-eicosatrienoyl)-sn-glycero-3-phospho-1D-myo-inositol + (9Z)-octadecenoate + H(+). The enzyme catalyses 1,2-di-(9Z-octadecenoyl)-sn-glycero-3-phosphocholine + H2O = (9Z-octadecenoyl)-sn-glycero-3-phosphocholine + (9Z)-octadecenoate + H(+). The protein operates within phospholipid metabolism; phosphatidylinositol metabolism. Its activity is regulated as follows. Phosphatidate (1,2-diacyl-sn-glycero-3-phosphate, PA) can positively regulate phospholipase A1 activity. In terms of biological role, phospholipase A1 (PLA1) that hydrolyzes ester bonds at the sn-1 position of glycerophospholipids producing a free fatty acid and a lysophospholipid. Prefers phosphatidate (1,2-diacyl-sn-glycero-3-phosphate, PA) as substrate in vitro, but can efficiently hydrolyze phosphatidylinositol (1,2-diacyl-sn-glycero-3-phospho-(1D-myo-inositol), PI), as well as a range of other glycerophospholipid substrates such as phosphatidylcholine (1,2-diacyl-sn-glycero-3-phosphocholine, PC), phosphatidylethanolamine (1,2-diacyl-sn-glycero-3-phosphoethanolamine, PE), phosphatidylserine (1,2-diacyl-sn-glycero-3-phospho-L-serine, PS) and phosphatidylglycerol (1,2-diacyl-sn-glycero-3-phospho-(1'-sn-glycerol), PG). Involved in the regulation of the endogenous content of polyunsaturated PI and PS lipids in the nervous system. Changes in these lipids extend to downstream metabolic products like PI phosphates PIP and PIP2, which play fundamental roles in cell biology. Regulates mitochondrial morphology. These dynamic changes may be due to PA hydrolysis at the mitochondrial surface. May play a regulatory role in spermatogenesis or sperm function. The chain is Phospholipase DDHD1 from Homo sapiens (Human).